Consider the following 360-residue polypeptide: Squamosa promoter-binding-like protein 7 (360 aa).

Residues 74 to 89 (AQGSGGGGGGGGGGSA) are compositionally biased toward gly residues. Positions 74–98 (AQGSGGGGGGGGGGSADQGKRKEKA) are disordered. Residues 105-182 (VPRCQVEGCD…AGHNERRRRS (78 aa)) form an SBP-type zinc finger. Residues Cys-108, Cys-113, Cys-130, His-133, Cys-149, Cys-152, His-156, and Cys-168 each coordinate Zn(2+). The Bipartite nuclear localization signal signature appears at 165–181 (KKSCRRRLAGHNERRRR). Residues 172–182 (LAGHNERRRRS) show a composition bias toward basic residues. Disordered stretches follow at residues 172-196 (LAGH…AHPH), 261-306 (FFSD…HENQ), and 318-360 (TTAA…ARVV).

As to expression, expressed in young panicles.

The protein resides in the nucleus. Trans-acting factor that binds specifically to the consensus nucleotide sequence 5'-TNCGTACAA-3'. May be involved in panicle development. This chain is Squamosa promoter-binding-like protein 7 (SPL7), found in Oryza sativa subsp. japonica (Rice).